A 46-amino-acid chain; its full sequence is Esculentin-1 (46 aa).

Cys40 and Cys46 are oxidised to a cystine.

It belongs to the frog skin active peptide (FSAP) family. Brevinin subfamily. As to expression, expressed by the skin glands.

It localises to the secreted. Shows antibacterial activity against representative Gram-negative and Gram-positive bacterial species, and hemolytic activity. The protein is Esculentin-1 of Pelophylax lessonae (Pool frog).